The chain runs to 153 residues: Ribonuclease 2 (153 aa).

It belongs to the BetVI family.

The protein resides in the cytoplasm. Catalyzes the two-stage endonucleolytic cleavage to 3'-phosphomononucleotides and 3'-phosphooligonucleotides with 2',3'-cyclic phosphate intermediates. This Panax ginseng (Korean ginseng) protein is Ribonuclease 2.